Here is a 537-residue protein sequence, read N- to C-terminus: CTP synthase (537 aa).

Positions 1 to 268 (MPAKFIFVTG…DSIVVERLKL (268 aa)) are amidoligase domain. Position 14 (Ser-14) interacts with CTP. A UTP-binding site is contributed by Ser-14. 15–20 (SLGKGI) provides a ligand contact to ATP. An L-glutamine-binding site is contributed by Tyr-55. Asp-72 provides a ligand contact to ATP. Positions 72 and 142 each coordinate Mg(2+). CTP is bound by residues 149-151 (DIE), 189-194 (KTKPTQ), and Lys-225. UTP contacts are provided by residues 189 to 194 (KTKPTQ) and Lys-225. A Glutamine amidotransferase type-1 domain is found at 293–534 (EIALVGKYVT…IGAACRRAGG (242 aa)). Gly-354 is a binding site for L-glutamine. The Nucleophile; for glutamine hydrolysis role is filled by Cys-381. Residues 382–385 (LGMQ), Glu-405, and Arg-462 each bind L-glutamine. Catalysis depends on residues His-507 and Glu-509.

Belongs to the CTP synthase family. Homotetramer.

The catalysed reaction is UTP + L-glutamine + ATP + H2O = CTP + L-glutamate + ADP + phosphate + 2 H(+). The enzyme catalyses L-glutamine + H2O = L-glutamate + NH4(+). It carries out the reaction UTP + NH4(+) + ATP = CTP + ADP + phosphate + 2 H(+). The protein operates within pyrimidine metabolism; CTP biosynthesis via de novo pathway; CTP from UDP: step 2/2. Allosterically activated by GTP, when glutamine is the substrate; GTP has no effect on the reaction when ammonia is the substrate. The allosteric effector GTP functions by stabilizing the protein conformation that binds the tetrahedral intermediate(s) formed during glutamine hydrolysis. Inhibited by the product CTP, via allosteric rather than competitive inhibition. In terms of biological role, catalyzes the ATP-dependent amination of UTP to CTP with either L-glutamine or ammonia as the source of nitrogen. Regulates intracellular CTP levels through interactions with the four ribonucleotide triphosphates. In Moorella thermoacetica (strain ATCC 39073 / JCM 9320), this protein is CTP synthase.